The primary structure comprises 229 residues: Protein AF_2251 (229 aa).

This sequence belongs to the CinA family.

The sequence is that of Protein AF_2251 from Archaeoglobus fulgidus (strain ATCC 49558 / DSM 4304 / JCM 9628 / NBRC 100126 / VC-16).